The sequence spans 296 residues: Ribosomal RNA small subunit methyltransferase A (296 aa).

S-adenosyl-L-methionine-binding residues include Asn28, Leu30, Gly55, Glu77, Asp103, and Asn122.

The protein belongs to the class I-like SAM-binding methyltransferase superfamily. rRNA adenine N(6)-methyltransferase family. RsmA subfamily.

The protein localises to the cytoplasm. It carries out the reaction adenosine(1518)/adenosine(1519) in 16S rRNA + 4 S-adenosyl-L-methionine = N(6)-dimethyladenosine(1518)/N(6)-dimethyladenosine(1519) in 16S rRNA + 4 S-adenosyl-L-homocysteine + 4 H(+). Specifically dimethylates two adjacent adenosines (A1518 and A1519) in the loop of a conserved hairpin near the 3'-end of 16S rRNA in the 30S particle. May play a critical role in biogenesis of 30S subunits. This chain is Ribosomal RNA small subunit methyltransferase A, found in Sinorhizobium fredii (strain NBRC 101917 / NGR234).